The sequence spans 158 residues: Transcriptional repressor NrdR (158 aa).

The segment at 3 to 34 (CPYCGYPDSKVIDSRPTDDNTSIRRRRECLKC) is a zinc-finger region. One can recognise an ATP-cone domain in the interval 49-139 (ILVIKKDNRR…VYRQFKDINT (91 aa)).

This sequence belongs to the NrdR family. The cofactor is Zn(2+).

In terms of biological role, negatively regulates transcription of bacterial ribonucleotide reductase nrd genes and operons by binding to NrdR-boxes. This chain is Transcriptional repressor NrdR, found in Thermoanaerobacter sp. (strain X514).